Reading from the N-terminus, the 904-residue chain is Endoplasmic reticulum metallopeptidase 1 (904 aa).

The residue at position 1 (methionine 1) is an N-acetylmethionine. Residues 1-63 (MEWGSESAAV…PGGSGGASRG (63 aa)) lie on the Cytoplasmic side of the membrane. The segment at 1–65 (MEWGSESAAV…GSGGASRGAG (65 aa)) is disordered. Residues 55 to 65 (GGSGGASRGAG) show a composition bias toward gly residues. The helical transmembrane segment at 64-84 (AGTGLSEVRAALGLALYLIAL) threads the bilayer. Residues 85-399 (RTLVQLSLQQ…AASKYRHGNM (315 aa)) are Lumenal-facing. An N-linked (GlcNAc...) asparagine glycan is attached at asparagine 182. An intrachain disulfide couples cysteine 204 to cysteine 222. Zn(2+) contacts are provided by histidine 205 and aspartate 217. Glutamate 251 functions as the Proton acceptor in the catalytic mechanism. Glutamate 252, glutamate 278, and histidine 354 together coordinate Zn(2+). A helical transmembrane segment spans residues 400–420 (VFFDVLGLFVIAYPSRIGSII). Residues 421 to 457 (NYMVVMGVVLYLGKKFLQPKHKTGNYKKDFLCGLGIT) lie on the Cytoplasmic side of the membrane. A helical transmembrane segment spans residues 458–478 (LISWFTSLVTVLIIAVFISLI). Topologically, residues 479-489 (GQSLSWYNHFY) are lumenal. The helical transmembrane segment at 490–510 (VSVCLYGTATVAKIILIHTLA) threads the bilayer. Topologically, residues 511-519 (KRFYYMNAS) are cytoplasmic. A helical transmembrane segment spans residues 520-540 (AQYLGEVFFDISLFVHCCFLV). A topological domain (lumenal) is located at residue threonine 541. Residues 542–562 (LTYQGLCSAFISAVWVAFPLL) form a helical membrane-spanning segment. The Cytoplasmic segment spans residues 563 to 579 (TKLCVHKDFKQHGAQGK). The helical transmembrane segment at 580–600 (FIAFYLLGMFIPYLYALYLIW) threads the bilayer. Topologically, residues 601 to 621 (AVFEMFTPILGRSGSEIPPDV) are lumenal. The helical transmembrane segment at 622–642 (VLASILAGCTMILSSYFINFI) threads the bilayer. Topologically, residues 643–651 (YLAKSTKKT) are cytoplasmic. A helical membrane pass occupies residues 652 to 672 (MLTLTLVCAITFLLVCSGTFF). At 673–904 (PYSSNPANPK…WVCTYDLFVF (232 aa)) the chain is on the lumenal side. N-linked (GlcNAc...) asparagine glycosylation is present at asparagine 730.

Belongs to the peptidase M28 family. The cofactor is Zn(2+).

It is found in the endoplasmic reticulum membrane. Its function is as follows. Within the ovary, required for the organization of somatic cells and oocytes into discrete follicular structures. The sequence is that of Endoplasmic reticulum metallopeptidase 1 from Homo sapiens (Human).